Reading from the N-terminus, the 290-residue chain is Bifunctional protein FolD (290 aa).

NADP(+)-binding positions include glycine 166–serine 168 and isoleucine 232.

Belongs to the tetrahydrofolate dehydrogenase/cyclohydrolase family. In terms of assembly, homodimer.

It carries out the reaction (6R)-5,10-methylene-5,6,7,8-tetrahydrofolate + NADP(+) = (6R)-5,10-methenyltetrahydrofolate + NADPH. The catalysed reaction is (6R)-5,10-methenyltetrahydrofolate + H2O = (6R)-10-formyltetrahydrofolate + H(+). Its pathway is one-carbon metabolism; tetrahydrofolate interconversion. Functionally, catalyzes the oxidation of 5,10-methylenetetrahydrofolate to 5,10-methenyltetrahydrofolate and then the hydrolysis of 5,10-methenyltetrahydrofolate to 10-formyltetrahydrofolate. The chain is Bifunctional protein FolD from Proteus mirabilis (strain HI4320).